The primary structure comprises 419 residues: tRNA modification GTPase MnmE (419 aa).

Residues arginine 20, glutamate 76, and arginine 115 each coordinate (6S)-5-formyl-5,6,7,8-tetrahydrofolate. One can recognise a TrmE-type G domain in the interval 211 to 348 (GYEVAIIGPP…LLDLVYDRLR (138 aa)). Asparagine 221 contacts K(+). GTP-binding positions include 221 to 226 (NAGKST), 240 to 246 (SEIAGTT), and 265 to 268 (DTAG). Serine 225 contacts Mg(2+). K(+)-binding residues include serine 240, isoleucine 242, and threonine 245. Residue threonine 246 coordinates Mg(2+). Lysine 419 contributes to the (6S)-5-formyl-5,6,7,8-tetrahydrofolate binding site.

Belongs to the TRAFAC class TrmE-Era-EngA-EngB-Septin-like GTPase superfamily. TrmE GTPase family. In terms of assembly, homodimer. Heterotetramer of two MnmE and two MnmG subunits. K(+) serves as cofactor.

It is found in the cytoplasm. In terms of biological role, exhibits a very high intrinsic GTPase hydrolysis rate. Involved in the addition of a carboxymethylaminomethyl (cmnm) group at the wobble position (U34) of certain tRNAs, forming tRNA-cmnm(5)s(2)U34. This chain is tRNA modification GTPase MnmE, found in Paracoccus denitrificans (strain Pd 1222).